A 424-amino-acid polypeptide reads, in one-letter code: Zinc finger protein 597 (424 aa).

In terms of domain architecture, KRAB spans 14–88 (ILFEDLAVYF…KYPIAAPLVP (75 aa)). C2H2-type zinc fingers lie at residues 156 to 178 (YKCP…QKIH), 184 to 206 (HKCG…RRIH), 212 to 234 (YKCA…MNSH), and 240 to 262 (YTCS…QKSH). Residue lysine 300 forms a Glycyl lysine isopeptide (Lys-Gly) (interchain with G-Cter in SUMO2) linkage. C2H2-type zinc fingers lie at residues 341–363 (LQCP…QNIH), 369–391 (HKCK…QKSH), and 397–419 (FKCT…KRTH).

It belongs to the krueppel C2H2-type zinc-finger protein family.

The protein localises to the nucleus. In terms of biological role, may be involved in transcriptional regulation. This Homo sapiens (Human) protein is Zinc finger protein 597 (ZNF597).